Reading from the N-terminus, the 162-residue chain is MARVEL domain-containing protein 1 (162 aa).

Residues 1–17 (MPTQPQEKRSFLQFLKS) lie on the Cytoplasmic side of the membrane. The 142-residue stretch at 14–155 (FLKSFVGIVR…SGIYCSCRKC (142 aa)) folds into the MARVEL domain. The helical transmembrane segment at 18-38 (FVGIVRVLQILLGAGLWVTIA) threads the bilayer. Residues 39 to 47 (ANKYEGSIH) are Extracellular-facing. Residues 48–68 (FVLFVAVLFWLLTLAIFILTL) form a helical membrane-spanning segment. Residues 69–86 (LDKQDLVPIVGGERWLLS) lie on the Cytoplasmic side of the membrane. A helical transmembrane segment spans residues 87 to 107 (NLIHDVVATLLYLSTIGIMIY). The Extracellular segment spans residues 108–127 (KTQKNSYCNLDVYKHHCLYK). Residues 128 to 148 (VYLTASVFACLTAAVYLLSGI) form a helical membrane-spanning segment. Over 149–162 (YCSCRKCRGERTVV) the chain is Cytoplasmic.

It localises to the membrane. It is found in the nucleus. In Danio rerio (Zebrafish), this protein is MARVEL domain-containing protein 1 (marveld1).